A 27-amino-acid chain; its full sequence is Cupiennin-4a (27 aa).

Residue glutamate 27 is modified to Glutamic acid 1-amide.

As to expression, expressed by the venom gland.

The protein localises to the secreted. This chain is Cupiennin-4a, found in Cupiennius salei (American wandering spider).